The chain runs to 355 residues: cGAMP-activated phospholipase (355 aa).

The PNPLA domain occupies 17–214; the sequence is LSLNGGGARG…VANNPSFIGL (198 aa). The GXGXXG signature appears at 21 to 26; the sequence is GGGARG. The short motif at 60–64 is the GXSXG element; that stretch reads GTSIG. The active-site Nucleophile is the Ser-62. Asp-201 functions as the Proton acceptor in the catalytic mechanism. A DGA/G motif is present at residues 201–203; that stretch reads DGG.

It belongs to the patatin family.

It carries out the reaction a 1,2-diacyl-sn-glycero-3-phosphocholine + H2O = a 2-acyl-sn-glycero-3-phosphocholine + a fatty acid + H(+). The catalysed reaction is 1,2-di-(9Z-octadecenoyl)-sn-glycero-3-phosphoethanolamine + 2 H2O = sn-glycero-3-phosphoethanolamine + 2 (9Z)-octadecenoate + 2 H(+). Phospholipase activity is specifically activated upon 3',3'-cGAMP (cGAMP) binding. Is not activated by the other cyclic dinucleotides 3',3'-cUAMP, 3',3'-c-diAMP and 3',3'-c-diGMP. Therefore, is specifically activated by only the nucleotide synthesized from its adjacently encoded nucleotidyltransferase (DncV). The cGAMP-activation of lipase is inhibited by T4 phage protein Acb2 (Vs.4). Its function is as follows. Effector phospholipase of a CBASS antiviral system. CBASS (cyclic oligonucleotide-based antiphage signaling system) provides immunity against bacteriophages. The CD-NTase protein (DncV) synthesizes cyclic nucleotides in response to infection; these serve as specific second messenger signals. The signals activate a diverse range of effectors, leading to bacterial cell death and thus abortive phage infection. A type II-A(GA) CBASS system. In terms of biological role, phospholipase that is activated upon binding to the cyclic dinucleotide (CDN) second messenger 3',3'-cyclic GMP-AMP (3',3'-cGAMP). Then degrades phosphatidylethanolamine (PE) and phosphatidylglycerol (PG), the major phospholipids in the cell membrane of V.cholerae, releasing 16:1 and 18:1 free fatty acids. Upon expression in E.coli with cognate DncV, the cell inner membrane shrinks and separates from the cell wall. Protects E.coli against phage infection. When the CBASS operon (capV-dncV-cap2-cap3) is introduced in E.coli MG1655 there is about 100-fold protection against phages P1 and T2. When the operon is introduced in E.coli MG1655 there is a more than 10(3) decrease in the efficiency of T2 plaque formation. Protects 100-fold against phage T5, offers no protection against T7. When the operon is introduced in E.coli MG1655 it protects against phages T2, T4, T5 and T6. Another paper shows the operon confers protection against phages P1, T2, T5 and T6 but not T4 or lambda. This chain is cGAMP-activated phospholipase, found in Vibrio cholerae serotype O1 (strain ATCC 39315 / El Tor Inaba N16961).